The primary structure comprises 224 residues: Putative adhesin A1E_05320 (224 aa).

The first 22 residues, 1 to 22, serve as a signal peptide directing secretion; sequence MKKLLLIAATSATMLSSTLSFA.

The chain is Putative adhesin A1E_05320 from Rickettsia canadensis (strain McKiel).